The chain runs to 102 residues: uncharacterized protein (102 aa).

The helical transmembrane segment at 27 to 47 (TISLVSAGLLEEIFLLFGLTF) threads the bilayer.

The protein localises to the membrane. This is an uncharacterized protein from Saccharomyces cerevisiae (strain ATCC 204508 / S288c) (Baker's yeast).